We begin with the raw amino-acid sequence, 345 residues long: MDGRTADSPLITAYRGGKPTRRPVWFMRQAGRSLPEYLKVREGVAMLDSCLRPELASEITLQPVRRHDVDAAIFFSDIVIPLKLAGVGVDIVPGVGPVLDKPVRTAEDVAALPQLTWEALEPIREAVRLTVAQLGKTPLIGFAGAPFTLAAYMVEGKPSRDHLGPRTMMHADPETWNALANWAADASGMFLRAQLEAGASAGQLFDSWAGSLGLADYKRFVAPASARALDHVRHLGAPLIHFGTGTSELLVAMRDVGVDVVGVDYRLPLDEANRRLGGTVPLQGNIDPALLSAPWAVLEAHVREVIKAGSFAPGHVLNLGHGVPPETDPDVLTRVVELIHSISPE.

Substrate is bound by residues 28–32, Asp77, Tyr152, Ser207, and His321; that span reads RQAGR.

This sequence belongs to the uroporphyrinogen decarboxylase family. Homodimer.

Its subcellular location is the cytoplasm. It carries out the reaction uroporphyrinogen III + 4 H(+) = coproporphyrinogen III + 4 CO2. The protein operates within porphyrin-containing compound metabolism; protoporphyrin-IX biosynthesis; coproporphyrinogen-III from 5-aminolevulinate: step 4/4. Its function is as follows. Catalyzes the decarboxylation of four acetate groups of uroporphyrinogen-III to yield coproporphyrinogen-III. This is Uroporphyrinogen decarboxylase from Arthrobacter sp. (strain FB24).